A 353-amino-acid polypeptide reads, in one-letter code: UPF0283 membrane protein YcjF (353 aa).

Residues 1 to 19 (MSEPLKPRIDFAEPLKEEP) are compositionally biased toward basic and acidic residues. Residues 1–35 (MSEPLKPRIDFAEPLKEEPTSAFKAQQTFSEAESR) form a disordered region. The next 3 membrane-spanning stretches (helical) occupy residues 70 to 90 (MVMG…IQWT), 100 to 120 (VALG…GSVV), and 213 to 233 (ESTL…FIAW).

This sequence belongs to the UPF0283 family.

It is found in the cell inner membrane. The chain is UPF0283 membrane protein YcjF from Salmonella agona (strain SL483).